The primary structure comprises 72 residues: Rubredoxin in uptake hydrogenase operon (72 aa).

Residues 19–70 (DAVLECKICWHRYDPAVGDEVWQILAGTPFAALPAHWRCPQCDGDREQFMVV) enclose the Rubredoxin-like domain. Positions 24, 27, 57, and 60 each coordinate Fe cation.

The protein belongs to the rubredoxin family. It depends on Fe(3+) as a cofactor.

Could be an electron transport intermediate in hydrogen oxidation. The protein is Rubredoxin in uptake hydrogenase operon (hupR) of Azotobacter chroococcum mcd 1.